Consider the following 199-residue polypeptide: MANRGPSYGLSREVQEKIEQKYDADLENKLVDWIILQCAEDIEHPPPGRAHFQKWLMDGTVLCKLINSLYPPGQEPIPKISESKMAFKQMEQISQFLKAAETYGVRTTDIFQTVDLWEGKDMAAVQRTLMALGSVAVTKDDGCYRGEPSWFHRKAQQNRRGFSEEQLRQGQNVIGLQMGSNKGASQAGMTGYGMPRQIM.

The Calponin-homology (CH) domain maps to 24-136 (ADLENKLVDW…RTLMALGSVA (113 aa)). Ser-163 carries the post-translational modification Phosphoserine. The Calponin-like repeat unit spans residues 174–199 (IGLQMGSNKGASQAGMTGYGMPRQIM). Residues 176 to 188 (LQMGSNKGASQAG) show a composition bias toward polar residues. The disordered stretch occupies residues 176–199 (LQMGSNKGASQAGMTGYGMPRQIM).

This sequence belongs to the calponin family. Widely expressed in the brain. Expression is increased in the superior frontal cortex of alcoholics, but not in the motor cortex or cerebellum.

The chain is Transgelin-3 (TAGLN3) from Homo sapiens (Human).